The following is a 95-amino-acid chain: uncharacterized protein (95 aa).

The signal sequence occupies residues 1 to 19 (MAILMLSLQLILLLIPSIS). Residues Asn-38 and Asn-41 are each glycosylated (N-linked (GlcNAc...) asparagine).

It localises to the secreted. This is an uncharacterized protein from Homo sapiens (Human).